Here is a 426-residue protein sequence, read N- to C-terminus: Histidine--tRNA ligase (426 aa).

Belongs to the class-II aminoacyl-tRNA synthetase family. Homodimer.

Its subcellular location is the cytoplasm. The catalysed reaction is tRNA(His) + L-histidine + ATP = L-histidyl-tRNA(His) + AMP + diphosphate + H(+). The chain is Histidine--tRNA ligase from Legionella pneumophila subsp. pneumophila (strain Philadelphia 1 / ATCC 33152 / DSM 7513).